Here is a 175-residue protein sequence, read N- to C-terminus: Small ribosomal subunit protein uS7 (175 aa).

The protein belongs to the universal ribosomal protein uS7 family. In terms of assembly, part of the 30S ribosomal subunit. Contacts proteins S9 and S11.

Functionally, one of the primary rRNA binding proteins, it binds directly to 16S rRNA where it nucleates assembly of the head domain of the 30S subunit. Is located at the subunit interface close to the decoding center, probably blocks exit of the E-site tRNA. In Legionella pneumophila (strain Paris), this protein is Small ribosomal subunit protein uS7.